A 174-amino-acid polypeptide reads, in one-letter code: Acetolactate synthase small subunit (174 aa).

Residues 4-78 enclose the ACT domain; that stretch reads TLSVLVQDEA…NILNVQDVTN (75 aa).

It belongs to the acetolactate synthase small subunit family. Dimer of large and small chains.

The protein resides in the plastid. The protein localises to the chloroplast. It carries out the reaction 2 pyruvate + H(+) = (2S)-2-acetolactate + CO2. Its pathway is amino-acid biosynthesis; L-isoleucine biosynthesis; L-isoleucine from 2-oxobutanoate: step 1/4. It functions in the pathway amino-acid biosynthesis; L-valine biosynthesis; L-valine from pyruvate: step 1/4. This Porphyra purpurea (Red seaweed) protein is Acetolactate synthase small subunit (ilvH).